We begin with the raw amino-acid sequence, 580 residues long: Micronemal protein 4 (580 aa).

The signal sequence occupies residues M1–A25. Apple domains follow at residues C68 to C137, C141 to C214, C232 to C301, C305 to G375, C419 to C488, and C492 to C565. Cystine bridges form between C68–C137, C93–C115, C97–C103, C141–C214, C166–C188, C170–C176, C232–C301, C257–C279, C261–C267, C305–C380, C332–C354, C336–C342, C419–C488, C444–C466, and C448–C454.

In terms of assembly, monomer. Part of the MIC6-MIC1-MIC4 complex. Interacts (via the second apple domain) directly with MIC1 (via the beta-finger region). Interacts with murine TLR2; the interaction promotes activation of bone marrow-derived dendritic cells and macrophages in the host. Interacts with murine TLR4; the interaction promotes activation of bone marrow-derived dendritic cells and macrophages in the host. Post-translationally, proteolytically cleaved at the N- and C-terminus after release from the microneme.

The protein resides in the cytoplasmic vesicle. Its subcellular location is the secretory vesicle. It is found in the microneme. It localises to the host early endosome. With respect to regulation, lacto-N-biose inhibits binding to asialofetuin, a host glycoprotein. Its function is as follows. Soluble adhesin with carbohydrate-binding activity. Binds to galactose-terminating oligosaccharides. Required for attachment of the parasite to the host cell prior to invasion. Triggers the activation of murine bone marrow-derived dendritic cells and macrophages and production of pro-inflammatory cytokines, such as IL12 (IL12B/IL12A), in host TLR2/TLR4-dependent manner. Triggers the production of anti-inflammatory cytokine IL10 in murine bone marrow-derived macrophages in host TLR4-dependent manner. Induces transient endotoxin tolerance in murine bone marrow-derived macrophages, manifested by reduced TNF-alpha (TNF) production in response to challenge with lipopolysaccharides (LPS). The polypeptide is Micronemal protein 4 (Toxoplasma gondii).